The sequence spans 304 residues: MYYGFDMGGTKIELGVFDENLQRIWHKRVPTPREDYPQLLQILRDLTEEADTYCGVQGSVGIGIPGLPNADDGTVFTANVPSAMGQPLQADLSRLIQREVRIDNDANCFALSEAWDPEFRTYPTVLGLILGTGVGGGLIVNGSIVSGRNHITGEFGHFRLPVDALDILGADIPRVPCGCGHRGCIENYISGRGFEWMYSHFYQHTLPATDIIAHYAAGEPKAVAHVERFMDVLAVCLGNLLTMLDPHLVVVGGGLSNFEKIYQELPKRLPAHLLRVARLPRIEKARYGDSGGVRGAAFLHLAEK.

ATP-binding positions include 4–11 and 133–140; these read GFDMGGTK and GVGGGLIV. 4 residues coordinate Zn(2+): histidine 157, cysteine 177, cysteine 179, and cysteine 184.

It belongs to the ROK (NagC/XylR) family. NagK subfamily.

It carries out the reaction N-acetyl-D-glucosamine + ATP = N-acetyl-D-glucosamine 6-phosphate + ADP + H(+). Its pathway is cell wall biogenesis; peptidoglycan recycling. In terms of biological role, catalyzes the phosphorylation of N-acetyl-D-glucosamine (GlcNAc) derived from cell-wall degradation, yielding GlcNAc-6-P. The protein is N-acetyl-D-glucosamine kinase of Yersinia pseudotuberculosis serotype IB (strain PB1/+).